Here is a 109-residue protein sequence, read N- to C-terminus: Trafficking protein particle complex subunit 2-like protein (109 aa).

The protein belongs to the TRAPP small subunits family. Sedlin subfamily. As to quaternary structure, component of the multisubunit TRAPP (transport protein particle) complex, which includes at least TRAPPC2, TRAPPC2L, TRAPPC3, TRAPPC3L, TRAPPC4, TRAPPC5, TRAPPC8, TRAPPC9, TRAPPC10, TRAPPC11 and TRAPPC12. Interacts with the heterodimer TRAPPC3-TRAPPC6A.

It localises to the cytoplasm. The protein localises to the perinuclear region. Its subcellular location is the endoplasmic reticulum. It is found in the golgi apparatus. Functionally, may play a role in vesicular transport from endoplasmic reticulum to Golgi. The protein is Trafficking protein particle complex subunit 2-like protein (TRAPPC2L) of Pongo abelii (Sumatran orangutan).